The primary structure comprises 320 residues: MSESSTGAGLGPGIVVIDKPSGMTSHDVVARCRRIFCTRRVGHAGTLDPMATGVLVLGVDRATKILGLLAGASKEYVATIRLGQTTSTEDAEGELLQCVSARHVTDEAIATAIGRLRGDIKQVPSAVSAIKVDGRRAYRLVREGHVVELQARPVRIDRFEVLAVRPGPEVGLADVIDLDVEVECSSGTYIRALARDLGDAFGVGGHLTSLRRTRVGRFELDQAWSLEDLAELPRLSRTLDETCLLMFPRRDLTVSEVEATSNGRPISSAGIDGIYAASDADGRVIALLRDEGPRTKSVVVLHPVFVRVSIGRGIVGVIEA.

The Nucleophile role is filled by D48.

Belongs to the pseudouridine synthase TruB family. Type 1 subfamily.

It carries out the reaction uridine(55) in tRNA = pseudouridine(55) in tRNA. Its function is as follows. Responsible for synthesis of pseudouridine from uracil-55 in the psi GC loop of transfer RNAs. In Mycobacterium leprae (strain TN), this protein is tRNA pseudouridine synthase B.